Reading from the N-terminus, the 446-residue chain is Mannan endo-1,6-alpha-mannosidase DCW1 (446 aa).

A signal peptide spans 1–18 (MRLVTLLSGLVSLVSVFG). N-linked (GlcNAc...) asparagine glycans are attached at residues Asn31, Asn81, Asn106, Asn200, Asn222, Asn237, Asn262, Asn278, Asn285, Asn334, Asn391, and Asn397. The disordered stretch occupies residues 389–408 (PYNATNGGNSTGDGAAGTKP). A lipid anchor (GPI-anchor amidated serine) is attached at Ser422. Residues 423 to 446 (RAGAGIITAIIGISIIACALWLVY) constitute a propeptide, removed in mature form.

The protein belongs to the glycosyl hydrolase 76 family.

The protein resides in the secreted. It localises to the cell wall. It is found in the cell membrane. The enzyme catalyses Random hydrolysis of (1-&gt;6)-alpha-D-mannosidic linkages in unbranched (1-&gt;6)-mannans.. In terms of biological role, required for normal synthesis of the cell wall. This Candida glabrata (strain ATCC 2001 / BCRC 20586 / JCM 3761 / NBRC 0622 / NRRL Y-65 / CBS 138) (Yeast) protein is Mannan endo-1,6-alpha-mannosidase DCW1 (DCW1).